Here is an 86-residue protein sequence, read N- to C-terminus: UPF0297 protein SH1302 (86 aa).

This sequence belongs to the UPF0297 family.

In Staphylococcus haemolyticus (strain JCSC1435), this protein is UPF0297 protein SH1302.